A 392-amino-acid chain; its full sequence is Streptogrisin-D (392 aa).

Positions 1 to 64 (MCVSRRRNSG…AGFTFQTANA (64 aa)) are cleaved as a signal peptide. Positions 65–204 (SDDVPAFGAK…NRTAGEFTPL (140 aa)) are excised as a propeptide. Cys218 and Cys238 are oxidised to a cystine. Residues His237, Asp266, and Ser348 each act as charge relay system in the active site. Cys342 and Cys369 are oxidised to a cystine.

Belongs to the peptidase S1 family. In terms of assembly, homodimer.

Has a primary specificity for large aliphatic or aromatic amino acids. The protein is Streptogrisin-D (sprD) of Streptomyces griseus.